A 309-amino-acid chain; its full sequence is Protein-L-isoaspartate O-methyltransferase (309 aa).

The disordered stretch occupies residues 1 to 46; it reads MSGERAKRFPLALEDLKRAPRKSDGRAGERHAAIAAPKAADKPAAV. The segment covering 14–32 has biased composition (basic and acidic residues); sequence EDLKRAPRKSDGRAGERHA. Over residues 33–46 the composition is skewed to low complexity; that stretch reads AIAAPKAADKPAAV. Residue Ser-156 is part of the active site.

Belongs to the methyltransferase superfamily. L-isoaspartyl/D-aspartyl protein methyltransferase family.

It is found in the cytoplasm. The enzyme catalyses [protein]-L-isoaspartate + S-adenosyl-L-methionine = [protein]-L-isoaspartate alpha-methyl ester + S-adenosyl-L-homocysteine. Its function is as follows. Catalyzes the methyl esterification of L-isoaspartyl residues in peptides and proteins that result from spontaneous decomposition of normal L-aspartyl and L-asparaginyl residues. It plays a role in the repair and/or degradation of damaged proteins. This Burkholderia vietnamiensis (strain G4 / LMG 22486) (Burkholderia cepacia (strain R1808)) protein is Protein-L-isoaspartate O-methyltransferase.